The primary structure comprises 61 residues: ATP synthase F(0) complex subunit 8 (61 aa).

The helical transmembrane segment at 10–32 (FMILSSTWLIYTIILQPKILSHL) threads the bilayer.

It belongs to the ATPase protein 8 family. Component of the ATP synthase complex composed at least of ATP5F1A/subunit alpha, ATP5F1B/subunit beta, ATP5MC1/subunit c (homooctomer), MT-ATP6/subunit a, MT-ATP8/subunit 8, ATP5ME/subunit e, ATP5MF/subunit f, ATP5MG/subunit g, ATP5MK/subunit k, ATP5MJ/subunit j, ATP5F1C/subunit gamma, ATP5F1D/subunit delta, ATP5F1E/subunit epsilon, ATP5PF/subunit F6, ATP5PB/subunit b, ATP5PD/subunit d, ATP5PO/subunit OSCP. ATP synthase complex consists of a soluble F(1) head domain (subunits alpha(3) and beta(3)) - the catalytic core - and a membrane F(0) domain - the membrane proton channel (subunits c, a, 8, e, f, g, k and j). These two domains are linked by a central stalk (subunits gamma, delta, and epsilon) rotating inside the F1 region and a stationary peripheral stalk (subunits F6, b, d, and OSCP).

The protein resides in the mitochondrion membrane. Functionally, subunit 8, of the mitochondrial membrane ATP synthase complex (F(1)F(0) ATP synthase or Complex V) that produces ATP from ADP in the presence of a proton gradient across the membrane which is generated by electron transport complexes of the respiratory chain. ATP synthase complex consist of a soluble F(1) head domain - the catalytic core - and a membrane F(1) domain - the membrane proton channel. These two domains are linked by a central stalk rotating inside the F(1) region and a stationary peripheral stalk. During catalysis, ATP synthesis in the catalytic domain of F(1) is coupled via a rotary mechanism of the central stalk subunits to proton translocation. In vivo, can only synthesize ATP although its ATP hydrolase activity can be activated artificially in vitro. Part of the complex F(0) domain. This is ATP synthase F(0) complex subunit 8 from Chelonia mydas (Green sea-turtle).